We begin with the raw amino-acid sequence, 133 residues long: Nickel-responsive regulator (133 aa).

4 residues coordinate Ni(2+): histidine 76, histidine 87, histidine 89, and cysteine 95.

This sequence belongs to the transcriptional regulatory CopG/NikR family. Homotetramer. The cofactor is Ni(2+).

In terms of biological role, transcriptional repressor of the nikABCDE operon. Is active in the presence of excessive concentrations of intracellular nickel. The polypeptide is Nickel-responsive regulator (Shigella dysenteriae serotype 1 (strain Sd197)).